The primary structure comprises 272 residues: 4-hydroxy-tetrahydrodipicolinate reductase (272 aa).

NAD(+) contacts are provided by residues 10–15, Glu-36, 100–102, and 124–127; these read GAGGRM, GTT, and SGNM. The active-site Proton donor/acceptor is the His-157. His-158 provides a ligand contact to (S)-2,3,4,5-tetrahydrodipicolinate. Lys-161 acts as the Proton donor in catalysis. 167-168 lines the (S)-2,3,4,5-tetrahydrodipicolinate pocket; sequence GT.

The protein belongs to the DapB family.

The protein resides in the cytoplasm. It carries out the reaction (S)-2,3,4,5-tetrahydrodipicolinate + NAD(+) + H2O = (2S,4S)-4-hydroxy-2,3,4,5-tetrahydrodipicolinate + NADH + H(+). The enzyme catalyses (S)-2,3,4,5-tetrahydrodipicolinate + NADP(+) + H2O = (2S,4S)-4-hydroxy-2,3,4,5-tetrahydrodipicolinate + NADPH + H(+). Its pathway is amino-acid biosynthesis; L-lysine biosynthesis via DAP pathway; (S)-tetrahydrodipicolinate from L-aspartate: step 4/4. Its function is as follows. Catalyzes the conversion of 4-hydroxy-tetrahydrodipicolinate (HTPA) to tetrahydrodipicolinate. This is 4-hydroxy-tetrahydrodipicolinate reductase from Afipia carboxidovorans (strain ATCC 49405 / DSM 1227 / KCTC 32145 / OM5) (Oligotropha carboxidovorans).